The following is a 151-amino-acid chain: Cytochrome c oxidase subunit 5B, mitochondrial (151 aa).

The transit peptide at 1-17 (MLRTSLTKGARLTGTRF) directs the protein to the mitochondrion. Topologically, residues 18–85 (VQTKALSKAT…EWGPRRPVHG (68 aa)) are mitochondrial matrix. The chain crosses the membrane as a helical span at residues 86–108 (KGDVAFITKGVFLGLGISFGLFG). Residues 109-151 (LVRLLANPETPKTMNREWQLKSDEYLKSKNANPWGGYSQVQSK) lie on the Mitochondrial intermembrane side of the membrane.

Belongs to the cytochrome c oxidase IV family. In terms of assembly, component of the cytochrome c oxidase (complex IV, CIV), a multisubunit enzyme composed of 12 subunits. The complex is composed of a catalytic core of 3 subunits COX1, COX2 and COX3, encoded in the mitochondrial DNA, and 9 supernumerary subunits COX4, COX5A (or COX5B), COX6, COX7, COX8, COX9, COX12, COX13 and COX26, which are encoded in the nuclear genome. COX5A is the predominant subunit V during aerobic/normoxic growth, it gets replaced by COX5B under anaerobic/hypoxic conditions. The complex exists as a monomer or a dimer and forms supercomplexes (SCs) in the inner mitochondrial membrane with a dimer of ubiquinol-cytochrome c oxidoreductase (cytochrome b-c1 complex, complex III, CIII), resulting in 2 different assemblies (supercomplexes III(2)IV and III(2)IV(2)).

The protein localises to the mitochondrion inner membrane. It participates in energy metabolism; oxidative phosphorylation. In terms of biological role, component of the cytochrome c oxidase, the last enzyme in the mitochondrial electron transport chain which drives oxidative phosphorylation. The respiratory chain contains 3 multisubunit complexes succinate dehydrogenase (complex II, CII), ubiquinol-cytochrome c oxidoreductase (cytochrome b-c1 complex, complex III, CIII) and cytochrome c oxidase (complex IV, CIV), that cooperate to transfer electrons derived from NADH and succinate to molecular oxygen, creating an electrochemical gradient over the inner membrane that drives transmembrane transport and the ATP synthase. Cytochrome c oxidase is the component of the respiratory chain that catalyzes the reduction of oxygen to water. Electrons originating from reduced cytochrome c in the intermembrane space (IMS) are transferred via the dinuclear copper A center (CU(A)) of COX2 and heme A of COX1 to the active site in COX1, a binuclear center (BNC) formed by heme A3 and copper B (CU(B)). The BNC reduces molecular oxygen to 2 water molecules using 4 electrons from cytochrome c in the IMS and 4 protons from the mitochondrial matrix. The sequence is that of Cytochrome c oxidase subunit 5B, mitochondrial (COX5B) from Saccharomyces cerevisiae (strain ATCC 204508 / S288c) (Baker's yeast).